A 204-amino-acid chain; its full sequence is UPF0637 protein SaurJH9_1166 (204 aa).

Belongs to the UPF0637 family.

The chain is UPF0637 protein SaurJH9_1166 from Staphylococcus aureus (strain JH9).